The chain runs to 400 residues: Arrestin, lateral eye (400 aa).

This sequence belongs to the arrestin family. In terms of processing, phosphorylated.

Plays an important role in the photoreceptor transduction. The chain is Arrestin, lateral eye from Limulus polyphemus (Atlantic horseshoe crab).